We begin with the raw amino-acid sequence, 425 residues long: Polyribonucleotide 5'-hydroxyl-kinase Clp1 (425 aa).

Residues glutamate 22, lysine 62, and 124–129 (DVGKST) contribute to the ATP site.

Belongs to the Clp1 family. Clp1 subfamily. As to quaternary structure, component of the tRNA splicing endonuclease complex, composed of CLP1, TSEN2, TSEN15, TSEN34 and TSEN54. Component of pre-mRNA cleavage complex II (CF-II). Also associates with numerous components of the pre-mRNA cleavage complex I (CF-I/CFIm), including NUDT21, CPSF2, CPSF3, CPSF6 and CPSF7. Interacts with CSTF2 and SYMPK. The cofactor is Mg(2+). Mn(2+) serves as cofactor. It depends on Ni(2+) as a cofactor.

The protein resides in the nucleus. The enzyme catalyses a 5'-end dephospho-2'-deoxyribonucleoside-DNA + ATP = a 5'-end 5'-phospho-2'-deoxyribonucleoside-DNA + ADP + H(+). The catalysed reaction is a 5'-end dephospho-ribonucleoside-RNA + ATP = a 5'-end 5'-phospho-ribonucleoside-RNA + ADP + H(+). Its function is as follows. Polynucleotide kinase that can phosphorylate the 5'-hydroxyl groups of double-stranded RNA (dsRNA), single-stranded RNA (ssRNA), double-stranded DNA (dsDNA) and double-stranded DNA:RNA hybrids. dsRNA is phosphorylated more efficiently than dsDNA, and the RNA component of a DNA:RNA hybrid is phosphorylated more efficiently than the DNA component. Plays a key role in both tRNA splicing and mRNA 3'-end formation. Component of the tRNA splicing endonuclease complex: phosphorylates the 5'-terminus of the tRNA 3'-exon during tRNA splicing; this phosphorylation event is a prerequisite for the subsequent ligation of the two exon halves and the production of a mature tRNA. Its role in tRNA splicing and maturation is required for cerebellar development. Component of the pre-mRNA cleavage complex II (CF-II), which seems to be required for mRNA 3'-end formation. Also phosphorylates the 5'-terminus of exogenously introduced short interfering RNAs (siRNAs), which is a necessary prerequisite for their incorporation into the RNA-induced silencing complex (RISC). However, endogenous siRNAs and microRNAs (miRNAs) that are produced by the cleavage of dsRNA precursors by DICER1 already contain a 5'-phosphate group, so this protein may be dispensible for normal RNA-mediated gene silencing. In Bos taurus (Bovine), this protein is Polyribonucleotide 5'-hydroxyl-kinase Clp1.